A 349-amino-acid polypeptide reads, in one-letter code: Transcription factor HBP-1a (349 aa).

Positions 1 to 11 (MGSNDPSTPSK) are enriched in polar residues. 4 disordered regions span residues 1-39 (MGSN…WPGF), 101-196 (FHYP…NKPM), 224-277 (GATG…QAEC), and 312-349 (NTSL…QKEP). Residues 113–124 (PAGAQGAAPGAA) show a composition bias toward low complexity. The segment covering 174 to 191 (NENGSAQNGVSHSSSHGT) has biased composition (polar residues). Positions 252–315 (ELKKQKRKLS…EELLSKNTSL (64 aa)) constitute a bZIP domain. The tract at residues 254–273 (KKQKRKLSNRESARRSRLRK) is basic motif. A compositionally biased stretch (basic and acidic residues) spans 261-277 (SNRESARRSRLRKQAEC). Residues 280 to 315 (LGQRAEALKSENSSLRIELDRIKKEYEELLSKNTSL) are leucine-zipper. The span at 334–349 (MNERGDTNGGSHQKEP) shows a compositional bias: basic and acidic residues.

It belongs to the bZIP family. As to quaternary structure, binds DNA as a dimer.

It localises to the nucleus. Functionally, binds to the hexamer motif 5'-ACGTCA-3' of histone gene promoters. This Triticum aestivum (Wheat) protein is Transcription factor HBP-1a.